The primary structure comprises 642 residues: Threonine--tRNA ligase (642 aa).

Residues methionine 1–threonine 61 form the TGS domain. Positions aspartate 243–proline 534 are catalytic. Cysteine 334, histidine 385, and histidine 511 together coordinate Zn(2+).

It belongs to the class-II aminoacyl-tRNA synthetase family. Homodimer. Requires Zn(2+) as cofactor.

The protein resides in the cytoplasm. The enzyme catalyses tRNA(Thr) + L-threonine + ATP = L-threonyl-tRNA(Thr) + AMP + diphosphate + H(+). Catalyzes the attachment of threonine to tRNA(Thr) in a two-step reaction: L-threonine is first activated by ATP to form Thr-AMP and then transferred to the acceptor end of tRNA(Thr). Also edits incorrectly charged L-seryl-tRNA(Thr). This chain is Threonine--tRNA ligase, found in Shewanella sediminis (strain HAW-EB3).